A 424-amino-acid chain; its full sequence is UPF0597 protein Sputcn32_1209 (424 aa).

It belongs to the UPF0597 family.

The protein is UPF0597 protein Sputcn32_1209 of Shewanella putrefaciens (strain CN-32 / ATCC BAA-453).